A 194-amino-acid polypeptide reads, in one-letter code: Large ribosomal subunit protein bL27c (194 aa).

The transit peptide at 1–57 directs the protein to the chloroplast; the sequence is MAVTTSMSFNLMASFRGMSLSSSSSSSFFKGEFGPSSLRLPNKSPLSVSPFPLTIES. The interval 57–76 is disordered; the sequence is SAHKKGAGSTKNGRDSKGQR.

Component of the chloroplast large ribosomal subunit (LSU). Mature 70S chloroplast ribosomes of higher plants consist of a small (30S) and a large (50S) subunit. The 30S small subunit contains 1 molecule of ribosomal RNA (16S rRNA) and 24 different proteins. The 50S large subunit contains 3 rRNA molecules (23S, 5S and 4.5S rRNA) and 33 different proteins.

The protein localises to the plastid. It is found in the chloroplast. Its function is as follows. Component of the chloroplast ribosome (chloro-ribosome), a dedicated translation machinery responsible for the synthesis of chloroplast genome-encoded proteins, including proteins of the transcription and translation machinery and components of the photosynthetic apparatus. This chain is Large ribosomal subunit protein bL27c (RPL27), found in Spinacia oleracea (Spinach).